Here is a 400-residue protein sequence, read N- to C-terminus: Delta(12) fatty acid desaturase (400 aa).

Residues 91-111 form a helical membrane-spanning segment; sequence LAWPAYWIMQGIVCTGIWVLA. The Histidine box-1 motif lies at 112-116; sequence HECGH. A Histidine box-2 motif is present at residues 148 to 152; that stretch reads HSKHH. 3 helical membrane-spanning segments follow: residues 199–219, 245–265, and 277–297; these read IVTL…YLIM, FFDI…LIYA, and YYII…FLQH. Residues 339 to 343 carry the Histidine box-3 motif; that stretch reads HVAHH.

This sequence belongs to the fatty acid desaturase type 1 family.

It is found in the membrane. The enzyme catalyses (9Z)-octadecenoyl-CoA + 2 Fe(II)-[cytochrome b5] + O2 + 2 H(+) = (9Z,12Z)-octadecadienoyl-CoA + 2 Fe(III)-[cytochrome b5] + 2 H2O. It catalyses the reaction (9Z)-hexadecenoyl-CoA + 2 Fe(II)-[cytochrome b5] + O2 + 2 H(+) = (9Z,12Z)-hexadecadienoyl-CoA + 2 Fe(III)-[cytochrome b5] + 2 H2O. The protein operates within lipid metabolism; polyunsaturated fatty acid biosynthesis. Functionally, catalyzes the desaturation of oleic acid (Delta(9)-18:1) to linoleic acid (Delta(9), Delta(12)-18:2). The polypeptide is Delta(12) fatty acid desaturase (Mortierella isabellina (Filamentous fungus)).